We begin with the raw amino-acid sequence, 832 residues long: Histone acetyltransferase KAT2B (832 aa).

Gly residues predominate over residues 1 to 22 (MSEAGGAGPGGCGAGAGAGAGP). Disordered regions lie at residues 1-54 (MSEA…ACGP) and 395-436 (SYNS…DSHV). The span at 24–39 (ALPPQPAALPPAPPQG) shows a compositional bias: pro residues. A compositionally biased stretch (low complexity) spans 40 to 54 (SPCAAAAGGSGACGP). Residues 395–413 (SYNSTSSSLEQPNAGSSSP) show a composition bias toward polar residues. Basic and acidic residues predominate over residues 425-436 (PGEKRKMTDSHV). Residues 503 to 651 (LNQKPNKKIL…GATLMGCELN (149 aa)) enclose the N-acetyltransferase domain. Glu570 serves as the catalytic Proton donor/acceptor. Residues 574–576 (CAV), 581–587 (QVKGYGT), and 612–615 (YAIG) contribute to the acetyl-CoA site. The interval 706–725 (IRETGWKPSGKEKSKEPRDP) is disordered. Positions 714 to 725 (SGKEKSKEPRDP) are enriched in basic and acidic residues. A Bromo domain is found at 723-827 (RDPDQLYSTL…KFFFSKIKEA (105 aa)).

It belongs to the acetyltransferase family. GCN5 subfamily. In terms of assembly, interacts with SIRT1. Interacts (unsumoylated form) with NR2C1; the interaction promotes transactivation activity. Interacts with EP300, CREBBP and DDX17. Interacts with NCOA1 and NCOA3. Component of a large chromatin remodeling complex, at least composed of MYSM1, KAT2B/PCAF, RBM10 and KIF11/TRIP5. Interacts with NR2C2 (hypophosphorylated and unsumoylated form); the interaction promotes the transactivation activity of NR2C2. Interacts with KLF1; the interaction does not acetylate KLF1 and there is no enhancement of its transactivational activity. Interacts with NFE4. Interacts with MECOM. Interacts with E2F1; the interaction acetylates E2F1 augmenting its DNA-binding and transcriptional activity. Interacts with NPAS2, BMAL1 and CLOCK. Interacts with BCAS3. Interacts with CEBPB. Interacts with NR4A3. Interacts with NFATC2. Interacts with TBX5. Interacts with PLK4. Interacts with RB1; this interaction leads to RB1 acetylation. Interacts with VRK1. (Microbial infection) Interacts with and acetylates HIV-1 Tat. As to quaternary structure, (Microbial infection) Interacts with HTLV-1 Tax. As to expression, ubiquitously expressed but most abundant in heart and skeletal muscle. Also expressed in the skin, in keratinocytes (at protein level).

It localises to the nucleus. The protein localises to the cytoplasm. Its subcellular location is the cytoskeleton. It is found in the microtubule organizing center. The protein resides in the centrosome. It catalyses the reaction L-lysyl-[histone] + acetyl-CoA = N(6)-acetyl-L-lysyl-[histone] + CoA + H(+). The catalysed reaction is L-lysyl-[protein] + acetyl-CoA = N(6)-acetyl-L-lysyl-[protein] + CoA + H(+). It carries out the reaction spermidine + acetyl-CoA = N(8)-acetylspermidine + CoA + H(+). Its activity is regulated as follows. Activated in vitro by very low concentrations of spermidine, but inhibited at spermidine concentrations higher than 4 uM. The activating effect of low spermidine concentrations may be mediated by N(8)-acetylspermidine produced by KAT2B/P/CAF itself acting as a positive feedback loop. Functions as a histone acetyltransferase (HAT) to promote transcriptional activation. Has significant histone acetyltransferase activity with core histones (H3 and H4), and also with nucleosome core particles. Has a a strong preference for acetylation of H3 at 'Lys-9' (H3K9ac). Also acetylates non-histone proteins, such as ACLY, MAPRE1/EB1, PLK4, RRP9/U3-55K and TBX5. Inhibits cell-cycle progression and counteracts the mitogenic activity of the adenoviral oncoprotein E1A. Acts as a circadian transcriptional coactivator which enhances the activity of the circadian transcriptional activators: NPAS2-BMAL1 and CLOCK-BMAL1 heterodimers. Involved in heart and limb development by mediating acetylation of TBX5, acetylation regulating nucleocytoplasmic shuttling of TBX5. Acts as a negative regulator of centrosome amplification by mediating acetylation of PLK4. Acetylates RRP9/U3-55K, a core subunit of the U3 snoRNP complex, impairing pre-rRNA processing. Acetylates MAPRE1/EB1, promoting dynamic kinetochore-microtubule interactions in early mitosis. Also acetylates spermidine. Its function is as follows. (Microbial infection) In case of HIV-1 infection, it is recruited by the viral protein Tat. Regulates Tat's transactivating activity and may help inducing chromatin remodeling of proviral genes. The chain is Histone acetyltransferase KAT2B from Homo sapiens (Human).